Reading from the N-terminus, the 472-residue chain is Cysteine--tRNA ligase (472 aa).

Cysteine 29 contributes to the Zn(2+) binding site. The 'HIGH' region motif lies at 31 to 41; that stretch reads PTVYDFAHIGN. 3 residues coordinate Zn(2+): cysteine 227, histidine 252, and glutamate 256. Positions 285–289 match the 'KMSKS' region motif; it reads KMSKS. Residue lysine 288 participates in ATP binding.

This sequence belongs to the class-I aminoacyl-tRNA synthetase family. In terms of assembly, monomer. Zn(2+) serves as cofactor.

Its subcellular location is the cytoplasm. It carries out the reaction tRNA(Cys) + L-cysteine + ATP = L-cysteinyl-tRNA(Cys) + AMP + diphosphate. In Bradyrhizobium sp. (strain BTAi1 / ATCC BAA-1182), this protein is Cysteine--tRNA ligase.